Consider the following 994-residue polypeptide: Glycine dehydrogenase (decarboxylating) (994 aa).

The interval 1-20 (MTDHAENRCGLEGPRPFSSR) is disordered. K716 is subject to N6-(pyridoxal phosphate)lysine.

The protein belongs to the GcvP family. The glycine cleavage system is composed of four proteins: P, T, L and H. It depends on pyridoxal 5'-phosphate as a cofactor.

It carries out the reaction N(6)-[(R)-lipoyl]-L-lysyl-[glycine-cleavage complex H protein] + glycine + H(+) = N(6)-[(R)-S(8)-aminomethyldihydrolipoyl]-L-lysyl-[glycine-cleavage complex H protein] + CO2. In terms of biological role, the glycine cleavage system catalyzes the degradation of glycine. The P protein binds the alpha-amino group of glycine through its pyridoxal phosphate cofactor; CO(2) is released and the remaining methylamine moiety is then transferred to the lipoamide cofactor of the H protein. The chain is Glycine dehydrogenase (decarboxylating) from Cutibacterium acnes (strain DSM 16379 / KPA171202) (Propionibacterium acnes).